Reading from the N-terminus, the 275-residue chain is NH(3)-dependent NAD(+) synthetase (275 aa).

47 to 54 (GISGGQDS) contacts ATP. Residue Asp53 coordinates Mg(2+). Arg141 is a binding site for deamido-NAD(+). Thr161 provides a ligand contact to ATP. Glu166 lines the Mg(2+) pocket. Deamido-NAD(+) is bound by residues Lys174 and Asp181. The ATP site is built by Lys190 and Thr212. 261–262 (HK) provides a ligand contact to deamido-NAD(+).

It belongs to the NAD synthetase family. Homodimer.

It carries out the reaction deamido-NAD(+) + NH4(+) + ATP = AMP + diphosphate + NAD(+) + H(+). It functions in the pathway cofactor biosynthesis; NAD(+) biosynthesis; NAD(+) from deamido-NAD(+) (ammonia route): step 1/1. Catalyzes the ATP-dependent amidation of deamido-NAD to form NAD. Uses ammonia as a nitrogen source. The chain is NH(3)-dependent NAD(+) synthetase from Lacticaseibacillus paracasei (strain ATCC 334 / BCRC 17002 / CCUG 31169 / CIP 107868 / KCTC 3260 / NRRL B-441) (Lactobacillus paracasei).